The primary structure comprises 491 residues: UDP-N-acetylmuramate--L-alanine ligase (491 aa).

126–132 (GTHGKTT) is a binding site for ATP.

It belongs to the MurCDEF family.

Its subcellular location is the cytoplasm. The enzyme catalyses UDP-N-acetyl-alpha-D-muramate + L-alanine + ATP = UDP-N-acetyl-alpha-D-muramoyl-L-alanine + ADP + phosphate + H(+). It participates in cell wall biogenesis; peptidoglycan biosynthesis. In terms of biological role, cell wall formation. This is UDP-N-acetylmuramate--L-alanine ligase from Shigella flexneri.